Reading from the N-terminus, the 101-residue chain is Small ribosomal subunit protein uS14 (101 aa).

The protein belongs to the universal ribosomal protein uS14 family. As to quaternary structure, part of the 30S ribosomal subunit. Contacts proteins S3 and S10.

Its function is as follows. Binds 16S rRNA, required for the assembly of 30S particles and may also be responsible for determining the conformation of the 16S rRNA at the A site. The protein is Small ribosomal subunit protein uS14 of Bartonella bacilliformis (strain ATCC 35685 / KC583 / Herrer 020/F12,63).